Here is a 709-residue protein sequence, read N- to C-terminus: Kelch domain-containing protein STK_09390 (709 aa).

Positions 1–22 (MKRNTLLALVLVILIFPTLSTA) are cleaved as a signal peptide. 6 Kelch repeats span residues 49–94 (KIFL…VCNN), 96–140 (LYVV…SYDY), 141–192 (KIYV…FNGS), 193–240 (ALFV…YYNG), 242–288 (MYLV…VQIG), and 290–340 (KLII…DTNA). Fibronectin type-III domains lie at 315-405 (PPPK…VPNP), 406-488 (PIIK…ASKA), 489-566 (NLTV…IYYI), and 568-643 (PASP…NDVR).

The polypeptide is Kelch domain-containing protein STK_09390 (Sulfurisphaera tokodaii (strain DSM 16993 / JCM 10545 / NBRC 100140 / 7) (Sulfolobus tokodaii)).